The chain runs to 1024 residues: Beta-galactosidase (1024 aa).

Substrate is bound by residues asparagine 103 and aspartate 202. Na(+) is bound at residue aspartate 202. Residues glutamate 417, histidine 419, and glutamate 462 each contribute to the Mg(2+) site. Residues glutamate 462 and 538–541 contribute to the substrate site; that span reads EYAH. Glutamate 462 functions as the Proton donor in the catalytic mechanism. The Nucleophile role is filled by glutamate 538. A Mg(2+)-binding site is contributed by asparagine 598. The Na(+) site is built by phenylalanine 602 and asparagine 605. Substrate is bound by residues asparagine 605 and tryptophan 1000.

It belongs to the glycosyl hydrolase 2 family. In terms of assembly, homotetramer. The cofactor is Mg(2+). Requires Na(+) as cofactor.

It catalyses the reaction Hydrolysis of terminal non-reducing beta-D-galactose residues in beta-D-galactosides.. This Escherichia coli (strain UTI89 / UPEC) protein is Beta-galactosidase.